A 158-amino-acid polypeptide reads, in one-letter code: Transmembrane protein 50B (158 aa).

Ala2 carries the N-acetylalanine modification. 4 consecutive transmembrane segments (helical) span residues Val28–Tyr48, His56–Ser76, Trp98–Phe118, and Val128–Tyr148.

It belongs to the UPF0220 family. May form homotrimers or homodimers.

It localises to the endoplasmic reticulum membrane. The protein localises to the golgi apparatus membrane. This chain is Transmembrane protein 50B (TMEM50B), found in Bos taurus (Bovine).